The sequence spans 560 residues: Glutamate--tRNA ligase, chloroplastic/mitochondrial (560 aa).

47 to 49 (RFA) contributes to the L-glutamate binding site. Positions 50–60 (PSPTGNLHVGG) match the 'HIGH' region motif. Residue His57 participates in ATP binding. L-glutamate contacts are provided by residues Glu83, 235 to 239 (YNFCV), and Arg253. Residues Glu256 and 291-295 (KLSKR) each bind ATP. A 'KMSKS' region motif is present at residues 291–295 (KLSKR).

This sequence belongs to the class-I aminoacyl-tRNA synthetase family. Glutamate--tRNA ligase type 1 subfamily.

It is found in the plastid. The protein localises to the chloroplast. Its subcellular location is the mitochondrion. The enzyme catalyses tRNA(Glu) + L-glutamate + ATP = L-glutamyl-tRNA(Glu) + AMP + diphosphate. In terms of biological role, catalyzes the attachment of glutamate to tRNA(Glu) in a two-step reaction: glutamate is first activated by ATP to form Glu-AMP and then transferred to the acceptor end of tRNA(Glu). The chain is Glutamate--tRNA ligase, chloroplastic/mitochondrial from Hordeum vulgare (Barley).